Consider the following 479-residue polypeptide: Cyclic AMP-responsive element-binding protein 3-like protein 3 (479 aa).

Residues 1 to 317 (MDGDIAAGKM…QSTSKPAHAG (317 aa)) are Cytoplasmic-facing. The tract at residues 67 to 144 (CILGPGDSDP…CPEPPRTQVQ (78 aa)) is disordered. Polar residues predominate over residues 98–110 (PQDTPPRSGTEPA). Residues 239–302 (VLKKIRRKIR…LSLLEQLKHL (64 aa)) enclose the bZIP domain. Residues 241 to 270 (KKIRRKIRNKQSAQESRKKKKEYIDGLENR) form a basic motif region. The tract at residues 281 to 302 (LQRKVLHLEKQNLSLLEQLKHL) is leucine-zipper. K290 is covalently cross-linked (Glycyl lysine isopeptide (Lys-Gly) (interchain with G-Cter in ubiquitin)). The chain crosses the membrane as a helical; Signal-anchor for type II membrane protein span at residues 318–338 (TCIAVLLLSFALIILPSISPF). Over 339-479 (NSNKVDSPGD…RLVQDALGVL (141 aa)) the chain is Lumenal. 3 N-linked (GlcNAc...) asparagine glycosylation sites follow: N411, N418, and N425.

It belongs to the bZIP family. ATF subfamily. As to quaternary structure, binds DNA as a dimer. May form homodimers. Interacts with ATF6. Interacts with SYNV1/HRD1; this interaction leads to CREB3L3 ubiquitination and proteasomal degradation. In terms of processing, following ER stress a fragment containing the cytoplasmic transcription factor domain is released by proteolysis. The cleavage seems to be performed sequentially by site-1 and site-2 proteases. N-glycosylation is required for optimal proteolytic activation. Post-translationally, ubiquitinated at Lys-290 by SYNV1/HRD1 via 'Lys-27'-linked ubiquitin. In terms of tissue distribution, expressed in adult liver (at protein level) and small intestine.

The protein localises to the endoplasmic reticulum membrane. It is found in the nucleus. Its function is as follows. Transcription factor that may act during endoplasmic reticulum (ER) stress by activating unfolded protein response target genes. Activated in response to cAMP stimulation. Binds to the cAMP response element (CRE). Activates transcription through box-B element. Activates transcription through CRE. May function synergistically with ATF6. In acute inflammatory response, may activate expression of acute phase response (APR) genes. May be involved in growth suppression. Regulates FGF21 transcription. Plays a crucial role in the regulation of triglyceride metabolism and is required for the maintenance of normal plasma triglyceride concentrations. The sequence is that of Cyclic AMP-responsive element-binding protein 3-like protein 3 (Creb3l3) from Mus musculus (Mouse).